The following is a 906-amino-acid chain: MASLGAFAKRLFGSSNDRRIKAYKARVEAINALEPDMIALSDDALRGKTAEFRARLADGAVLDELLPEAFAVVREAAKRSLGQRHYDVQLIGGMVLNDGNIAEMKTGEGKTLVSTLAAYLNALTGKGVHVVTVNDYLAKRDADWMGQIFRFLGLEVGVVLHGLDDNQRRAAYAADITYGTNNEYGFDYLRDNMKYQLASMVQRGHGFAIVDEVDSILIDEARTPLIISGPLDDKSDLYLSIDEVIPEIGEEDYELDEKQRTVNLTEEGNERVEEILRNRGIMLEGNLYDIENISIVHHVNNALRAHKLFQKDKDYIVKTGKVVIIDEFTGRMMEGRRYSDGLHQALEAKERVPIQPENQTLASITFQNYFRMYEKLSGMTGTALTEASEFGDIYGLDVLEIPTNKPIARIDEDDEVYRTTREKYEAMIGEIEECASRGQPVLVGTTSIEKSETLSELLKKKKVKHKVLNARYHEQEAHIVAQAGVPGNVTIATNMAGRGTDIQLGGNLDMRLADETAGIENEAELARKTAEVKADIEAKKQRALEAGGLYVIGTERHESRRIDNQLRGRSGRQGDPGRSKFYLSLEDDLMRIFGTDRMDGMLQKLGLQEGEAIVHPWINKALEKAQQKVEARNFDIRKNLLKFDNVMNDQRRAIFEQRIELMRAEDVSDTVDDMRRQVIDDMVAAHVPEKAYAEQWDMAGLKEEVKKNLDLDLPIETWADEEGIAEEEIRERLYSASDRHMASKAAQVGPDLMRQVEKAVLLQTLDQHWREHLMMLDHLRQAVGLRGYAQRDPLNEYKSEAFELFESLLARLRENVTRQLSVAQFITEAPRIEEQPLPEMQAHHTNPLTGEDEMADGDVATMQRPMRNDPGVAADPNDPRTWGKTPRNAPCPCGSGKKYKHCHGAL.

Residues glutamine 89, 107–111, and aspartate 501 each bind ATP; that span reads GEGKT. Positions 891, 893, 902, and 903 each coordinate Zn(2+).

The protein belongs to the SecA family. Monomer and homodimer. Part of the essential Sec protein translocation apparatus which comprises SecA, SecYEG and auxiliary proteins SecDF-YajC and YidC. Zn(2+) serves as cofactor.

Its subcellular location is the cell inner membrane. The protein resides in the cytoplasm. The enzyme catalyses ATP + H2O + cellular proteinSide 1 = ADP + phosphate + cellular proteinSide 2.. Functionally, part of the Sec protein translocase complex. Interacts with the SecYEG preprotein conducting channel. Has a central role in coupling the hydrolysis of ATP to the transfer of proteins into and across the cell membrane, serving both as a receptor for the preprotein-SecB complex and as an ATP-driven molecular motor driving the stepwise translocation of polypeptide chains across the membrane. The sequence is that of Protein translocase subunit SecA from Parvibaculum lavamentivorans (strain DS-1 / DSM 13023 / NCIMB 13966).